The sequence spans 344 residues: MTSNFSQAPLQLCYENVNASCIKTPYSPGLRVLLYMVFGFGAVLAVCGNLLVVISVLHFKQLHSPANFLIASLASADFLVGISVMPFSMVRSIESCWYFGDTFCSLHSCCDAAFCYSSLFHLCFISVDRYIAVTDPLVYPTKFTVSVSGICISISWILPLVYSSAVFYTGISATGIENLVSALNCVGGCQIVVNQDWVLIDFLLFLIPTLVMIILYSKIFLVAKQQAVKIETSISGSKGESSLESHKARVAKRERKAAKTLGVTVVAFMVSWLPYTIDTLIDAFMGFITPAYVYEICCWSAYYNSAMNPLIYAFFYPWFRKAIKLILSGEILKSHSSTMSLFSE.

Residues 1–33 are Extracellular-facing; the sequence is MTSNFSQAPLQLCYENVNASCIKTPYSPGLRVL. N4 and N18 each carry an N-linked (GlcNAc...) asparagine glycan. 2 disulfides stabilise this stretch: C21/C185 and C96/C189. Residues 34–54 traverse the membrane as a helical segment; that stretch reads LYMVFGFGAVLAVCGNLLVVI. Over 55 to 67 the chain is Cytoplasmic; that stretch reads SVLHFKQLHSPAN. The chain crosses the membrane as a helical span at residues 68–88; sequence FLIASLASADFLVGISVMPFS. Topologically, residues 89 to 102 are extracellular; that stretch reads MVRSIESCWYFGDT. Residues 103-127 traverse the membrane as a helical segment; the sequence is FCSLHSCCDAAFCYSSLFHLCFISV. The Cytoplasmic segment spans residues 128 to 146; sequence DRYIAVTDPLVYPTKFTVS. Residues 147-167 traverse the membrane as a helical segment; it reads VSGICISISWILPLVYSSAVF. Residues 168 to 196 lie on the Extracellular side of the membrane; that stretch reads YTGISATGIENLVSALNCVGGCQIVVNQD. Residues 197–217 form a helical membrane-spanning segment; it reads WVLIDFLLFLIPTLVMIILYS. Residues 218-260 lie on the Cytoplasmic side of the membrane; the sequence is KIFLVAKQQAVKIETSISGSKGESSLESHKARVAKRERKAAKT. The chain crosses the membrane as a helical span at residues 261–281; it reads LGVTVVAFMVSWLPYTIDTLI. Topologically, residues 282 to 291 are extracellular; it reads DAFMGFITPA. Residues 292 to 314 traverse the membrane as a helical segment; that stretch reads YVYEICCWSAYYNSAMNPLIYAF. Residues 315 to 344 lie on the Cytoplasmic side of the membrane; that stretch reads FYPWFRKAIKLILSGEILKSHSSTMSLFSE.

The protein belongs to the G-protein coupled receptor 1 family.

It localises to the cell membrane. Olfactory receptor activated by trace amines. Trace amine compounds are enriched in animal body fluids and act on trace amine-associated receptors (TAARs) to elicit both intraspecific and interspecific innate behaviors. Ligand-binding causes a conformation change that triggers signaling via G(s)-class of G alpha proteins (GNAL or GNAS). The protein is Trace amine-associated receptor 8a of Rattus norvegicus (Rat).